Reading from the N-terminus, the 172-residue chain is Peptidyl-prolyl cis-trans isomerase (172 aa).

A PPIase cyclophilin-type domain is found at 7–170 (FFDMSVGGQP…KKVVVEDCGQ (164 aa)).

This sequence belongs to the cyclophilin-type PPIase family. Not glycosylated. Expressed in pollen.

The protein resides in the cytoplasm. The catalysed reaction is [protein]-peptidylproline (omega=180) = [protein]-peptidylproline (omega=0). With respect to regulation, binds cyclosporin A (CsA). CsA mediates some of its effects via an inhibitory action on PPIase. Its function is as follows. PPIases accelerate the folding of proteins. It catalyzes the cis-trans isomerization of proline imidic peptide bonds in oligopeptides. This is Peptidyl-prolyl cis-trans isomerase (PCKR1) from Catharanthus roseus (Madagascar periwinkle).